The chain runs to 98 residues: NADH-ubiquinone oxidoreductase chain 4L (98 aa).

3 helical membrane passes run 1-21 (MIPT…GMLT), 27-47 (VASL…ATLI), and 61-81 (IILL…LISI).

The protein belongs to the complex I subunit 4L family. In terms of assembly, core subunit of respiratory chain NADH dehydrogenase (Complex I) which is composed of 45 different subunits.

The protein resides in the mitochondrion inner membrane. The catalysed reaction is a ubiquinone + NADH + 5 H(+)(in) = a ubiquinol + NAD(+) + 4 H(+)(out). Its function is as follows. Core subunit of the mitochondrial membrane respiratory chain NADH dehydrogenase (Complex I) which catalyzes electron transfer from NADH through the respiratory chain, using ubiquinone as an electron acceptor. Part of the enzyme membrane arm which is embedded in the lipid bilayer and involved in proton translocation. This is NADH-ubiquinone oxidoreductase chain 4L (MT-ND4L) from Macaca hecki (Heck's macaque).